The chain runs to 427 residues: Flotillin-1 (427 aa).

3 positions are modified to phosphoserine: S19, S163, and S385.

It belongs to the band 7/mec-2 family. Flotillin subfamily. In terms of assembly, heterooligomeric complex of flotillin-1 and flotillin-2 and caveolin-1 and caveolin-2. Interacts with ECPAS.

The protein localises to the cell membrane. Its subcellular location is the endosome. It is found in the membrane. The protein resides in the caveola. It localises to the melanosome. The protein localises to the membrane raft. Its function is as follows. May act as a scaffolding protein within caveolar membranes, functionally participating in formation of caveolae or caveolae-like vesicles. This Bos taurus (Bovine) protein is Flotillin-1 (FLOT1).